The chain runs to 293 residues: Glycine betaine-binding protein OpuAC (293 aa).

A signal peptide spans methionine 1–alanine 20. Cysteine 21 carries the N-palmitoyl cysteine lipid modification. Cysteine 21 carries S-diacylglycerol cysteine lipidation.

As to quaternary structure, the complex is composed of two ATP-binding proteins (OpuAA), two transmembrane proteins (OpuAB) and a solute-binding protein (OpuAC). Interacts with FloT.

The protein resides in the cell membrane. It localises to the membrane raft. Functionally, involved in a multicomponent binding-protein-dependent transport system for glycine betaine. The chain is Glycine betaine-binding protein OpuAC (opuAC) from Bacillus subtilis (strain 168).